We begin with the raw amino-acid sequence, 338 residues long: Holliday junction branch migration complex subunit RuvB (338 aa).

The tract at residues 1 to 180 (MTRLVTPDIT…FGVISRLEFY (180 aa)) is large ATPase domain (RuvB-L). Residues L19, R20, G61, K64, T65, T66, 127–129 (EDY), R170, Y180, and R217 contribute to the ATP site. T65 provides a ligand contact to Mg(2+). The segment at 181–251 (TDDELTTIVT…VVDESLKLLE (71 aa)) is small ATPAse domain (RuvB-S). The segment at 254–338 (EKGFDHMDRT…PPSSSQGNLF (85 aa)) is head domain (RuvB-H). 3 residues coordinate DNA: R290, R309, and R314.

Belongs to the RuvB family. As to quaternary structure, homohexamer. Forms an RuvA(8)-RuvB(12)-Holliday junction (HJ) complex. HJ DNA is sandwiched between 2 RuvA tetramers; dsDNA enters through RuvA and exits via RuvB. An RuvB hexamer assembles on each DNA strand where it exits the tetramer. Each RuvB hexamer is contacted by two RuvA subunits (via domain III) on 2 adjacent RuvB subunits; this complex drives branch migration. In the full resolvosome a probable DNA-RuvA(4)-RuvB(12)-RuvC(2) complex forms which resolves the HJ.

The protein localises to the cytoplasm. The catalysed reaction is ATP + H2O = ADP + phosphate + H(+). In terms of biological role, the RuvA-RuvB-RuvC complex processes Holliday junction (HJ) DNA during genetic recombination and DNA repair, while the RuvA-RuvB complex plays an important role in the rescue of blocked DNA replication forks via replication fork reversal (RFR). RuvA specifically binds to HJ cruciform DNA, conferring on it an open structure. The RuvB hexamer acts as an ATP-dependent pump, pulling dsDNA into and through the RuvAB complex. RuvB forms 2 homohexamers on either side of HJ DNA bound by 1 or 2 RuvA tetramers; 4 subunits per hexamer contact DNA at a time. Coordinated motions by a converter formed by DNA-disengaged RuvB subunits stimulates ATP hydrolysis and nucleotide exchange. Immobilization of the converter enables RuvB to convert the ATP-contained energy into a lever motion, pulling 2 nucleotides of DNA out of the RuvA tetramer per ATP hydrolyzed, thus driving DNA branch migration. The RuvB motors rotate together with the DNA substrate, which together with the progressing nucleotide cycle form the mechanistic basis for DNA recombination by continuous HJ branch migration. Branch migration allows RuvC to scan DNA until it finds its consensus sequence, where it cleaves and resolves cruciform DNA. The protein is Holliday junction branch migration complex subunit RuvB of Geobacter metallireducens (strain ATCC 53774 / DSM 7210 / GS-15).